We begin with the raw amino-acid sequence, 242 residues long: Vacuolar protein sorting-associated protein 28 (242 aa).

The VPS28 N-terminal domain maps to 11–125 (NQDISQLFHD…ERGIPITAEH (115 aa)). A VPS28 C-terminal domain is found at 148-242 (FNAKYVAEAT…AYKSFYALLD (95 aa)). Residues 148–242 (FNAKYVAEAT…AYKSFYALLD (95 aa)) form an interaction with VSP36 and VPS20 region.

This sequence belongs to the VPS28 family. As to quaternary structure, component of the ESCRT-I complex (endosomal sorting complex required for transport I) which consists of STP22, VPS28, SRN2 and MVB12 in a 1:1:1:1 stoichiometry. Self-associates. Interacts with VPS27; the interaction mediates the association with the ESCRT-0 complex. Interacts with VPS20; the interaction mediates the association with the ESCRT-III complex.

The protein localises to the cytoplasm. It is found in the endosome. It localises to the late endosome membrane. Functionally, component of the ESCRT-I complex, a regulator of vesicular trafficking process. Required for normal endocytic and biosynthetic traffic to the yeast vacuole. In Saccharomyces cerevisiae (strain ATCC 204508 / S288c) (Baker's yeast), this protein is Vacuolar protein sorting-associated protein 28 (VPS28).